A 131-amino-acid chain; its full sequence is Norrin (131 aa).

Residues 1–24 form the signal peptide; that stretch reads MRNHVLAASISMLSLLAIMGDTDS. Cystine bridges form between Cys37–Cys94, Cys53–Cys108, Cys63–Cys124, and Cys67–Cys126. Positions 37-130 constitute a CTCK domain; the sequence is CMRHHYVDSI…ILSCHCEECS (94 aa).

As to quaternary structure, homodimer; disulfide-linked. Component of a complex, at least composed of TSPAN12, FZD4, LRP5/6 and norrin (NDP). Binds FZD4 with high affinity. Interacts with LRP6 (via Beta-propellers 1 and 2). As to expression, expressed in the outer nuclear, inner nuclear and ganglion cell layers of the retina.

The protein resides in the secreted. Functionally, activates the canonical Wnt signaling pathway through FZD4 and LRP5 coreceptor. Plays a central role in retinal vascularization by acting as a ligand for FZD4 that signals via stabilizing beta-catenin (CTNNB1) and activating LEF/TCF-mediated transcriptional programs. Acts in concert with TSPAN12 to activate FZD4 independently of the Wnt-dependent activation of FZD4, suggesting the existence of a Wnt-independent signaling that also promote accumulation the beta-catenin (CTNNB1). May be involved in a pathway that regulates neural cell differentiation and proliferation. Possible role in neuroectodermal cell-cell interaction. This is Norrin (Ndp) from Mus musculus (Mouse).